A 139-amino-acid chain; its full sequence is Natriuretic peptides A (139 aa).

Positions 1–21 (MTALVLWGLLLLLGQHTQVNS) are cleaved as a signal peptide. Positions 22-114 (HVLGRPFSAS…QDLLMSLRKR (93 aa)) are excised as a propeptide. The cysteines at positions 118 and 134 are disulfide-linked.

This sequence belongs to the natriuretic peptide family.

The protein resides in the secreted. Its function is as follows. Hormone playing a key role in cardiovascular homeostasis through regulation of natriuresis, diuresis, and vasodilation. Has a cGMP-stimulating activity. The protein is Natriuretic peptides A (nppa) of Takifugu rubripes (Japanese pufferfish).